Consider the following 270-residue polypeptide: MLLGSVPQLDRVAVQLGPFPVYWYGIIIGTGVLLGLWLATREGERLGIPKDTFVDLVLIAVPIAILFARMYYVIFEWEYYAQNPSQIINIRQGGLAIHGGLIGAVVTGILFAKRRGVSFWKLADIAAPSILLGQAIGRWGNFMNQEAHGDEVTRQFLEGLHLPDFIINQMYIDGVYYHPTFLYESLWNFAGVILLLALRKVNLRRGELFFTYLIWYSIGRFFVEGLRTDSLMLGPLRIAQVMSIGLVVISIIFIIVRRKMGQADKRYSEN.

4 helical membrane passes run 19-39 (FPVY…LWLA), 56-76 (LVLI…VIFE), 92-112 (QGGL…ILFA), and 116-136 (GVSF…GQAI). Residue Arg-138 participates in a 1,2-diacyl-sn-glycero-3-phospho-(1'-sn-glycerol) binding. Transmembrane regions (helical) follow at residues 178–198 (HPTF…LLAL), 206–226 (GELF…VEGL), and 236–256 (LRIA…FIIV).

Belongs to the Lgt family.

It localises to the cell membrane. The catalysed reaction is L-cysteinyl-[prolipoprotein] + a 1,2-diacyl-sn-glycero-3-phospho-(1'-sn-glycerol) = an S-1,2-diacyl-sn-glyceryl-L-cysteinyl-[prolipoprotein] + sn-glycerol 1-phosphate + H(+). Its pathway is protein modification; lipoprotein biosynthesis (diacylglyceryl transfer). Catalyzes the transfer of the diacylglyceryl group from phosphatidylglycerol to the sulfhydryl group of the N-terminal cysteine of a prolipoprotein, the first step in the formation of mature lipoproteins. The protein is Phosphatidylglycerol--prolipoprotein diacylglyceryl transferase of Bacillus anthracis (strain A0248).